A 285-amino-acid polypeptide reads, in one-letter code: Urease accessory protein UreD (285 aa).

This sequence belongs to the UreD family. In terms of assembly, ureD, UreF and UreG form a complex that acts as a GTP-hydrolysis-dependent molecular chaperone, activating the urease apoprotein by helping to assemble the nickel containing metallocenter of UreC. The UreE protein probably delivers the nickel.

It is found in the cytoplasm. Functionally, required for maturation of urease via the functional incorporation of the urease nickel metallocenter. The chain is Urease accessory protein UreD from Cytophaga hutchinsonii (strain ATCC 33406 / DSM 1761 / CIP 103989 / NBRC 15051 / NCIMB 9469 / D465).